The following is a 209-amino-acid chain: Mitochondrial import inner membrane translocase subunit Tim23 (209 aa).

Helical transmembrane passes span 73–93 (FELA…FGAM), 125–145 (ALWA…GVII), and 172–194 (GGLR…YALY).

The protein belongs to the Tim17/Tim22/Tim23 family. Component of the TIM23 complex at least composed of TIMM23, TIMM17 (TIMM17A or TIMM17B) and TIMM50; within this complex, directly interacts with TIMM50. The complex interacts with the TIMM44 component of the PAM complex and with DNAJC15. Upon mitochondrial depolarization, interacts with PINK1; the interaction is required for PINK1 accumulation at the outer mitochondrial membrane, kinase activation by autophosphorylation and PRKN recruitement to mitochondria.

It localises to the mitochondrion inner membrane. Functionally, essential component of the TIM23 complex, a complex that mediates the translocation of transit peptide-containing proteins across the mitochondrial inner membrane. Has a role in the activation of stress-induced mitophagy by protecting PINK1 from OMA1-mediated degradation and facilitating its accumulation at the outer mitochondrial membrane in response to depolarization. This chain is Mitochondrial import inner membrane translocase subunit Tim23 (TIMM23), found in Pongo abelii (Sumatran orangutan).